Reading from the N-terminus, the 464-residue chain is Glycosyl hydrolase family 109 protein 1 (464 aa).

The signal sequence occupies residues 1–16 (MFKHLNALFIGLALFA). C17 is lipidated: N-palmitoyl cysteine. C17 carries S-diacylglycerol cysteine lipidation. NAD(+) contacts are provided by residues 63–64 (MR), D85, 134–137 (WKHH), 154–155 (EV), and N183. Substrate-binding positions include Y212, R228, 240 to 243 (YATH), and Y318. Y240 serves as a coordination point for NAD(+).

This sequence belongs to the Gfo/Idh/MocA family. Glycosyl hydrolase 109 subfamily. The cofactor is NAD(+).

It is found in the cell membrane. Glycosidase. Has no alpha-N-acetylgalactosaminidase activity. This chain is Glycosyl hydrolase family 109 protein 1, found in Bacteroides fragilis (strain ATCC 25285 / DSM 2151 / CCUG 4856 / JCM 11019 / LMG 10263 / NCTC 9343 / Onslow / VPI 2553 / EN-2).